Here is a 372-residue protein sequence, read N- to C-terminus: Ca(2+)/H(+) antiporter (372 aa).

11 helical membrane passes run 7–27 (IFLV…LGWG), 29–49 (TTVF…MGTA), 62–82 (GGLL…YIAL), 94–114 (LTGS…FLGG), 134–154 (MNLG…STGV), 162–182 (LSVA…VFSM), 222–242 (LWTG…ELLV), 251–271 (SLGL…GNAA), 294–314 (GSSL…GWAI), 320–340 (LNFN…VNSI), and 352–372 (ILLL…PTLV).

It belongs to the Ca(2+):cation antiporter (CaCA) (TC 2.A.19) family. Cation/proton exchanger (CAX) subfamily.

The protein localises to the cell inner membrane. Ca(+)/H(+) antiporter that extrudes calcium in exchange for external protons. Plays an important role in salt tolerance. Does not transport sodium or lithium. This Synechocystis sp. (strain ATCC 27184 / PCC 6803 / Kazusa) protein is Ca(2+)/H(+) antiporter.